A 249-amino-acid polypeptide reads, in one-letter code: Ribonuclease 3 (249 aa).

The region spanning 29-151 (SSDIEVIKKN…LIGALYECLR (123 aa)) is the RNase III domain. Position 65 (E65) interacts with Mg(2+). D69 is a catalytic residue. E137 and E140 together coordinate Mg(2+). E140 is an active-site residue. One can recognise a DRBM domain in the interval 179 to 249 (NEKSALQEWS…AKEALKKLTN (71 aa)). Positions 227–249 (GWGSSRKKAQKEAAKEALKKLTN) are disordered. A compositionally biased stretch (basic and acidic residues) spans 236-249 (QKEAAKEALKKLTN).

This sequence belongs to the ribonuclease III family. In terms of assembly, homodimer. Mg(2+) serves as cofactor.

It localises to the cytoplasm. The catalysed reaction is Endonucleolytic cleavage to 5'-phosphomonoester.. In terms of biological role, digests double-stranded RNA. Involved in the processing of primary rRNA transcript to yield the immediate precursors to the large and small rRNAs (23S and 16S). Processes some mRNAs, and tRNAs when they are encoded in the rRNA operon. Processes pre-crRNA and tracrRNA of type II CRISPR loci if present in the organism. This Prochlorococcus marinus (strain SARG / CCMP1375 / SS120) protein is Ribonuclease 3.